The chain runs to 529 residues: Heat shock protein 60 (529 aa).

The segment at 460-484 (YQATVQHPPPQSSYEEDGRRPPTQP) is disordered.

The polypeptide is Heat shock protein 60 (Giardia intestinalis (Giardia lamblia)).